The sequence spans 156 residues: Transcription elongation factor GreA (156 aa).

Residues 1–84 adopt a coiled-coil conformation; sequence MAKYTISKHR…IEDVMRSTDE (84 aa).

It belongs to the GreA/GreB family.

Necessary for efficient RNA polymerase transcription elongation past template-encoded arresting sites. The arresting sites in DNA have the property of trapping a certain fraction of elongating RNA polymerases that pass through, resulting in locked ternary complexes. Cleavage of the nascent transcript by cleavage factors such as GreA or GreB allows the resumption of elongation from the new 3'terminus. GreA releases sequences of 2 to 3 nucleotides. The sequence is that of Transcription elongation factor GreA from Ureaplasma urealyticum serovar 10 (strain ATCC 33699 / Western).